The chain runs to 56 residues: Ferredoxin (56 aa).

2 4Fe-4S ferredoxin-type domains span residues 2 to 29 (AYVINDSCISCGACEPECPVNAITAGDD) and 29 to 56 (DKYVIDAATCIDCGACAGVCPVDAPQPE). [4Fe-4S] cluster-binding residues include cysteine 9, cysteine 12, cysteine 15, cysteine 19, cysteine 38, cysteine 41, cysteine 44, and cysteine 48.

[4Fe-4S] cluster serves as cofactor.

Its function is as follows. Ferredoxins are iron-sulfur proteins that transfer electrons in a wide variety of metabolic reactions. This is Ferredoxin from Acetoanaerobium sticklandii (strain ATCC 12662 / DSM 519 / JCM 1433 / CCUG 9281 / NCIMB 10654 / HF) (Clostridium sticklandii).